Here is a 95-residue protein sequence, read N- to C-terminus: Small ribosomal subunit protein bS6 (95 aa).

The protein belongs to the bacterial ribosomal protein bS6 family.

Functionally, binds together with bS18 to 16S ribosomal RNA. The protein is Small ribosomal subunit protein bS6 of Acholeplasma laidlawii (strain PG-8A).